A 177-amino-acid polypeptide reads, in one-letter code: Putative HTH-type transcriptional regulator YvaV (177 aa).

Positions 49–73 form a DNA-binding region, H-T-H motif; that stretch reads LTELSEATGMSKTRMSQVVREMLDA.

The protein belongs to the GbsR family.

This chain is Putative HTH-type transcriptional regulator YvaV (yvaV), found in Bacillus subtilis (strain 168).